We begin with the raw amino-acid sequence, 225 residues long: uncharacterized protein (225 aa).

A run of 6 helical transmembrane segments spans residues 25-45 (MMLA…IPFL), 57-77 (VFLI…ITVA), 83-103 (FIWD…NFAI), 109-129 (LYFH…SLAT), 135-155 (LLTT…FGYV), and 187-207 (IFAL…LIGV).

It localises to the cell membrane. This is an uncharacterized protein from Mycoplasma pneumoniae (strain ATCC 29342 / M129 / Subtype 1) (Mycoplasmoides pneumoniae).